Reading from the N-terminus, the 252-residue chain is Centromere protein V (252 aa).

Residues 1–80 form a disordered region; sequence MRRTRSAVAT…EEPPPAVTPA (80 aa). Serine 18 is subject to Phosphoserine. Position 39 is an omega-N-methylarginine (arginine 39). The segment covering 54–64 has biased composition (pro residues); that stretch reads SAKPRPKPPPR. At threonine 78 the chain carries Phosphothreonine. The 113-residue stretch at 125 to 237 folds into the CENP-V/GFA domain; it reads HTGGCHCGAV…TEEFNGSDWE (113 aa). Zn(2+)-binding residues include cysteine 129, cysteine 131, cysteine 149, cysteine 151, cysteine 154, cysteine 193, and cysteine 196. Serine 234 carries the post-translational modification Phosphoserine.

It belongs to the Gfa family. The cofactor is Zn(2+).

The protein localises to the chromosome. The protein resides in the centromere. Its subcellular location is the kinetochore. It is found in the nucleus. It localises to the cytoplasm. The protein localises to the cytoskeleton. The protein resides in the spindle. In terms of biological role, required for distribution of pericentromeric heterochromatin in interphase nuclei and for centromere formation and organization, chromosome alignment and cytokinesis. This is Centromere protein V (Cenpv) from Mus musculus (Mouse).